Consider the following 251-residue polypeptide: Triosephosphate isomerase (251 aa).

Substrate is bound at residue 9–11; it reads NWK. His96 functions as the Electrophile in the catalytic mechanism. Glu168 acts as the Proton acceptor in catalysis. Substrate-binding positions include Gly174, Ser214, and 235 to 236; that span reads GG.

The protein belongs to the triosephosphate isomerase family. As to quaternary structure, homodimer.

Its subcellular location is the cytoplasm. It catalyses the reaction D-glyceraldehyde 3-phosphate = dihydroxyacetone phosphate. It participates in carbohydrate biosynthesis; gluconeogenesis. The protein operates within carbohydrate degradation; glycolysis; D-glyceraldehyde 3-phosphate from glycerone phosphate: step 1/1. Functionally, involved in the gluconeogenesis. Catalyzes stereospecifically the conversion of dihydroxyacetone phosphate (DHAP) to D-glyceraldehyde-3-phosphate (G3P). This is Triosephosphate isomerase from Cytophaga hutchinsonii (strain ATCC 33406 / DSM 1761 / CIP 103989 / NBRC 15051 / NCIMB 9469 / D465).